The sequence spans 285 residues: Undecaprenyl-diphosphatase 2 (285 aa).

The next 8 helical transmembrane spans lie at 5-25 (MDLL…LLPV), 47-67 (MTFL…VYFW), 86-106 (WYVL…QSLI), 122-142 (LFSN…LIIL), 156-176 (LPSA…RGFS), 198-218 (FSFA…LVRL), 235-255 (SLLL…LLAL), and 265-285 (GRWY…LTLA).

Belongs to the UppP family.

Its subcellular location is the cell inner membrane. The enzyme catalyses di-trans,octa-cis-undecaprenyl diphosphate + H2O = di-trans,octa-cis-undecaprenyl phosphate + phosphate + H(+). In terms of biological role, catalyzes the dephosphorylation of undecaprenyl diphosphate (UPP). Confers resistance to bacitracin. The protein is Undecaprenyl-diphosphatase 2 of Acinetobacter baylyi (strain ATCC 33305 / BD413 / ADP1).